The primary structure comprises 421 residues: MDLENKVKKMGLGHEQGFGAPCLKCKEKCEGFELHFWRKICRNCKCGQEEHDVLLSNEEDRKVGKLFEDTKYTTLIAKLKSDGIPMYKRNVMILTNPVAAKKNVSINTVTYEWAPPVHNQALARQYMQMLPKEKQPVAGSEGAQYRKKQLAKQLPAHDQDPSKCHELSPREVKEMEQFVKKYKSEALGVGDVKLPCEMDAQGPKQMYIPGGDRSTLPAMGAMEDKSAEHKSSQYFCYCCKLSMKEGDPAIYAERAGYDKLWHPACFLCSICHELLVDMIYFWKNEKLYCGRHYCDSEKPRCAGCDELIFSNEYTQAENQNWHLKHFCCFDCDSILAGEIYVMVNDKPVCKPCYVKNHAVVCQGCHNAIDPEVQRVTYNNFSWHASTECFLCSCCSKCLIGQKFMPVEGMVFCSVECKKMMS.

Residues 92 to 199 (MILTNPVAAK…GDVKLPCEMD (108 aa)) enclose the PET domain. The interval 133–164 (EKQPVAGSEGAQYRKKQLAKQLPAHDQDPSKC) is disordered. Over residues 155–164 (PAHDQDPSKC) the composition is skewed to basic and acidic residues. 3 LIM zinc-binding domains span residues 234 to 297 (YFCY…CDSE), 299 to 359 (PRCA…NHAV), and 362 to 421 (QGCH…KMMS).

The protein belongs to the prickle / espinas / testin family. Interacts via LIM domain 1 with ZYX. Interacts (via LIM domain 3) with ENAH and VASP. Interacts with ALKBH4, talin, actin, alpha-actinin, GRIP1 and PXN. Interacts (via LIM domain 2) with ACTL7A (via N-terminus). Heterodimer with ACTL7A; the heterodimer interacts with ENAH to form a heterotrimer.

It is found in the cytoplasm. The protein resides in the cell junction. Its subcellular location is the focal adhesion. Its function is as follows. Scaffold protein that may play a role in cell adhesion, cell spreading and in the reorganization of the actin cytoskeleton. Plays a role in the regulation of cell proliferation. May act as a tumor suppressor. In Plecturocebus moloch (Dusky titi monkey), this protein is Testin (TES).